Consider the following 365-residue polypeptide: Chorismate synthase (365 aa).

R48 lines the NADP(+) pocket. Residues 125–127 (RSS), 238–239 (NA), G278, 293–297 (KPTSS), and R319 each bind FMN.

This sequence belongs to the chorismate synthase family. Homotetramer. FMNH2 is required as a cofactor.

The catalysed reaction is 5-O-(1-carboxyvinyl)-3-phosphoshikimate = chorismate + phosphate. It participates in metabolic intermediate biosynthesis; chorismate biosynthesis; chorismate from D-erythrose 4-phosphate and phosphoenolpyruvate: step 7/7. Functionally, catalyzes the anti-1,4-elimination of the C-3 phosphate and the C-6 proR hydrogen from 5-enolpyruvylshikimate-3-phosphate (EPSP) to yield chorismate, which is the branch point compound that serves as the starting substrate for the three terminal pathways of aromatic amino acid biosynthesis. This reaction introduces a second double bond into the aromatic ring system. This chain is Chorismate synthase, found in Marinomonas sp. (strain MWYL1).